Reading from the N-terminus, the 480-residue chain is Ribosomal protein uS12 methylthiotransferase RimO (480 aa).

An MTTase N-terminal domain is found at 37–147; that stretch reads NRIGFVSLGC…VLKHVHKYVP (111 aa). Positions 46, 82, 111, 179, 183, and 186 each coordinate [4Fe-4S] cluster. The Radical SAM core domain maps to 165-402; sequence LTPKHYAYLK…MEVQAEISAE (238 aa). Residues 405-471 form the TRAM domain; the sequence is ARFVGRTMDI…EHDLWAELVD (67 aa).

Belongs to the methylthiotransferase family. RimO subfamily. It depends on [4Fe-4S] cluster as a cofactor.

Its subcellular location is the cytoplasm. The catalysed reaction is L-aspartate(89)-[ribosomal protein uS12]-hydrogen + (sulfur carrier)-SH + AH2 + 2 S-adenosyl-L-methionine = 3-methylsulfanyl-L-aspartate(89)-[ribosomal protein uS12]-hydrogen + (sulfur carrier)-H + 5'-deoxyadenosine + L-methionine + A + S-adenosyl-L-homocysteine + 2 H(+). Catalyzes the methylthiolation of an aspartic acid residue of ribosomal protein uS12. This Shewanella sp. (strain ANA-3) protein is Ribosomal protein uS12 methylthiotransferase RimO.